A 130-amino-acid chain; its full sequence is Large ribosomal subunit protein bL19c (130 aa).

Belongs to the bacterial ribosomal protein bL19 family.

It is found in the plastid. Its subcellular location is the chloroplast. The chain is Large ribosomal subunit protein bL19c (rpl19) from Chlorella vulgaris (Green alga).